Here is a 319-residue protein sequence, read N- to C-terminus: Alpha-hemolysin (319 aa).

The first 26 residues, 1–26 (MKTRIVSSVTTTLLLGSILMNPVANA), serve as a signal peptide directing secretion.

This sequence belongs to the aerolysin family. Self-assembles to form first a non-lytic oligomeric intermediate and then, a mushroom-shaped homoheptamer structure of 100 Angstroms in length and up to 100 Angstroms in diameter.

It localises to the secreted. In terms of biological role, alpha-toxin binds to the membrane of eukaryotic cells resulting in the release of low-molecular weight molecules and leading to an eventual osmotic lysis. Inhibits host neutrophil chemotaxis to the lesion region. Heptamer oligomerization and pore formation is required for lytic activity. This chain is Alpha-hemolysin (hly), found in Staphylococcus aureus (strain NCTC 8325 / PS 47).